Here is a 162-residue protein sequence, read N- to C-terminus: ATP synthase subunit delta, mitochondrial (162 aa).

Residues 1 to 24 constitute a mitochondrion transit peptide; that stretch reads MFSVARTAIRGAARPAVRIARRGY.

In terms of assembly, F-type ATP synthases have 2 components, the catalytic core F(1) and the membrane-embedded component F(0), linked together by a central stalk and a peripheral stalk. The central stalk, also called rotor shaft, is often seen as part of F(1). The peripheral stalk is seen as part of F(0). F(0) contains the membrane channel next to the rotor. F-type ATP synthases form dimers but each monomer functions independently in ATP generation. The dimer consists of 17 different polypeptides: ATP1 (subunit alpha, 3 molecules per monomer, part of F(1)), ATP2 (subunit beta, 3 copies per monomer, part of F(1)), ATP3 (subunit gamma, part of the central stalk), ATP4 (subunit b, part of the peripheral stalk), ATP5/OSCP (subunit 5/OSCP, part of the peripheral stalk), ATP6 (subunit a, part of the peripheral stalk), ATP7 (subunit d, part of the peripheral stalk), ATP8 (subunit 8, part of the peripheral stalk), OLI1 (subunit c, part of the rotor, 10 molecules per monomer), ATP14 (subunit h, part of the peripheral stalk), ATP15 (subunit epsilon, part of the central stalk), ATP16 (subunit delta, part of the central stalk), ATP17 (subunit f, part of the peripheral stalk), ATP18 (subunit i/j, part of the peripheral stalk), ATP19 (subunit k, dimer-specific, at interface between monomers), ATP20 (subunit g, at interface between monomers), TIM11 (subunit e, at interface between monomers).

It localises to the mitochondrion inner membrane. Functionally, mitochondrial membrane ATP synthase (F(1)F(0) ATP synthase or Complex V) produces ATP from ADP in the presence of a proton gradient across the membrane which is generated by electron transport complexes of the respiratory chain. F-type ATP synthases consist of two structural domains, F(1) - containing the extramembraneous catalytic core, and F(0) - containing the membrane proton channel, linked together by a central stalk and a peripheral stalk. During catalysis, ATP synthesis in the catalytic domain of F(1) is coupled via a rotary mechanism of the central stalk subunits to proton translocation. Part of the complex F(1) domain and the central stalk which is part of the complex rotary element. Rotation of the central stalk against the surrounding alpha/ATP1(3)beta/ATP2(3) subunits leads to hydrolysis of ATP in three separate catalytic sites on the beta/ATP2 subunits. The sequence is that of ATP synthase subunit delta, mitochondrial from Yarrowia lipolytica (strain CLIB 122 / E 150) (Yeast).